Consider the following 98-residue polypeptide: NADH-ubiquinone oxidoreductase chain 4L (98 aa).

3 consecutive transmembrane segments (helical) span residues 1 to 21 (MSMV…GLLV), 29 to 49 (SLLC…ITIL), and 61 to 81 (IILL…LVMV).

It belongs to the complex I subunit 4L family. Core subunit of respiratory chain NADH dehydrogenase (Complex I) which is composed of 45 different subunits.

It is found in the mitochondrion inner membrane. The catalysed reaction is a ubiquinone + NADH + 5 H(+)(in) = a ubiquinol + NAD(+) + 4 H(+)(out). Core subunit of the mitochondrial membrane respiratory chain NADH dehydrogenase (Complex I) which catalyzes electron transfer from NADH through the respiratory chain, using ubiquinone as an electron acceptor. Part of the enzyme membrane arm which is embedded in the lipid bilayer and involved in proton translocation. The protein is NADH-ubiquinone oxidoreductase chain 4L (MT-ND4L) of Mephitis mephitis (Striped skunk).